The sequence spans 99 residues: Nucleoid-associated protein MGAS2096_Spy1605 (99 aa).

The protein belongs to the YbaB/EbfC family. In terms of assembly, homodimer.

The protein localises to the cytoplasm. It is found in the nucleoid. In terms of biological role, binds to DNA and alters its conformation. May be involved in regulation of gene expression, nucleoid organization and DNA protection. The chain is Nucleoid-associated protein MGAS2096_Spy1605 from Streptococcus pyogenes serotype M12 (strain MGAS2096).